A 333-amino-acid polypeptide reads, in one-letter code: DNA-directed RNA polymerase subunit alpha (333 aa).

The interval 1–234 (MQSSVNEFLT…QQLAAFVDLK (234 aa)) is alpha N-terminal domain (alpha-NTD). Residues 248 to 333 (IDPILLRPVD…SLKKDDKATA (86 aa)) form an alpha C-terminal domain (alpha-CTD) region.

The protein belongs to the RNA polymerase alpha chain family. As to quaternary structure, homodimer. The RNAP catalytic core consists of 2 alpha, 1 beta, 1 beta' and 1 omega subunit. When a sigma factor is associated with the core the holoenzyme is formed, which can initiate transcription.

The catalysed reaction is RNA(n) + a ribonucleoside 5'-triphosphate = RNA(n+1) + diphosphate. Its function is as follows. DNA-dependent RNA polymerase catalyzes the transcription of DNA into RNA using the four ribonucleoside triphosphates as substrates. The sequence is that of DNA-directed RNA polymerase subunit alpha from Pseudomonas putida (Arthrobacter siderocapsulatus).